The primary structure comprises 367 residues: Inositol-3-phosphate synthase (367 aa).

Serine 2 carries the post-translational modification N-acetylserine. Residue lysine 73 forms an Isoglutamyl lysine isopeptide (Lys-Gln) (interchain with Q-Cter in protein Pup) linkage. 6 residues coordinate NAD(+): aspartate 78, alanine 137, tyrosine 157, serine 200, aspartate 235, and lysine 248.

Belongs to the myo-inositol 1-phosphate synthase family. The cofactor is NAD(+). Post-translationally, pupylated at Lys-73 by the prokaryotic ubiquitin-like protein Pup, which leads to its degradation by the proteasome.

It carries out the reaction D-glucose 6-phosphate = 1D-myo-inositol 3-phosphate. Its function is as follows. Key enzyme in myo-inositol biosynthesis pathway that catalyzes the conversion of glucose 6-phosphate to 1D-myo-inositol 3-phosphate in a NAD-dependent manner. This Mycobacterium tuberculosis (strain ATCC 25618 / H37Rv) protein is Inositol-3-phosphate synthase (ino1).